The primary structure comprises 411 residues: Imidazolonepropionase (411 aa).

His78 and His80 together coordinate Fe(3+). Residues His78 and His80 each contribute to the Zn(2+) site. 3 residues coordinate 4-imidazolone-5-propanoate: Arg87, Tyr150, and His183. N-formimidoyl-L-glutamate is bound at residue Tyr150. His248 is a Fe(3+) binding site. His248 contacts Zn(2+). Residue Gln251 participates in 4-imidazolone-5-propanoate binding. Asp322 is a binding site for Fe(3+). Position 322 (Asp322) interacts with Zn(2+). Residues Asn324 and Gly326 each contribute to the N-formimidoyl-L-glutamate site. Position 327 (Ser327) interacts with 4-imidazolone-5-propanoate.

This sequence belongs to the metallo-dependent hydrolases superfamily. HutI family. It depends on Zn(2+) as a cofactor. Fe(3+) serves as cofactor.

It localises to the cytoplasm. The catalysed reaction is 4-imidazolone-5-propanoate + H2O = N-formimidoyl-L-glutamate. It participates in amino-acid degradation; L-histidine degradation into L-glutamate; N-formimidoyl-L-glutamate from L-histidine: step 3/3. Catalyzes the hydrolytic cleavage of the carbon-nitrogen bond in imidazolone-5-propanoate to yield N-formimidoyl-L-glutamate. It is the third step in the universal histidine degradation pathway. This chain is Imidazolonepropionase, found in Christiangramia forsetii (strain DSM 17595 / CGMCC 1.15422 / KT0803) (Gramella forsetii).